Here is a 301-residue protein sequence, read N- to C-terminus: ATP synthase gamma chain (301 aa).

The protein belongs to the ATPase gamma chain family. In terms of assembly, F-type ATPases have 2 components, CF(1) - the catalytic core - and CF(0) - the membrane proton channel. CF(1) has five subunits: alpha(3), beta(3), gamma(1), delta(1), epsilon(1). CF(0) has three main subunits: a, b and c.

It localises to the cell inner membrane. Functionally, produces ATP from ADP in the presence of a proton gradient across the membrane. The gamma chain is believed to be important in regulating ATPase activity and the flow of protons through the CF(0) complex. The sequence is that of ATP synthase gamma chain from Bordetella bronchiseptica (strain ATCC BAA-588 / NCTC 13252 / RB50) (Alcaligenes bronchisepticus).